The following is a 959-amino-acid chain: DNA polymerase 1 (959 aa).

Residues methionine 1–glutamate 110 are disordered. The span at lysine 44 to serine 60 shows a compositional bias: basic and acidic residues.

This sequence belongs to the DNA polymerase type-B family.

It catalyses the reaction DNA(n) + a 2'-deoxyribonucleoside 5'-triphosphate = DNA(n+1) + diphosphate. This chain is DNA polymerase 1 (polA), found in Aeropyrum pernix (strain ATCC 700893 / DSM 11879 / JCM 9820 / NBRC 100138 / K1).